Reading from the N-terminus, the 147-residue chain is MRTYTPKPGDINRQWHVIDATDVVLGRLASQTAILLRGKHKATFASHMDMGDFVIIINAEKVALTGAKLEQKRAYRHSGYPGGLTSVNYAELLESNPVRAVEKAIKGMLPKNSLAAQQLGKLKVYRGAEHPHAAQQPKTFEITQVAQ.

This sequence belongs to the universal ribosomal protein uL13 family. In terms of assembly, part of the 50S ribosomal subunit.

In terms of biological role, this protein is one of the early assembly proteins of the 50S ribosomal subunit, although it is not seen to bind rRNA by itself. It is important during the early stages of 50S assembly. This chain is Large ribosomal subunit protein uL13, found in Pseudarthrobacter chlorophenolicus (strain ATCC 700700 / DSM 12829 / CIP 107037 / JCM 12360 / KCTC 9906 / NCIMB 13794 / A6) (Arthrobacter chlorophenolicus).